Here is a 248-residue protein sequence, read N- to C-terminus: UPF0246 protein RF_0769 (248 aa).

Belongs to the UPF0246 family.

This chain is UPF0246 protein RF_0769, found in Rickettsia felis (strain ATCC VR-1525 / URRWXCal2) (Rickettsia azadi).